The following is a 227-amino-acid chain: GTPase ERas (227 aa).

The span at 1 to 19 (MALPTKSSILDLSSGTPCT) shows a compositional bias: polar residues. A disordered region spans residues 1–25 (MALPTKSSILDLSSGTPCTRSPEES). 48-55 (GASGVGKS) serves as a coordination point for GTP. The Effector region signature appears at 70-78 (HDPTIQDSY). Residues 95–99 (DTSGQ) and 151–154 (NKCD) contribute to the GTP site. S-palmitoyl cysteine attachment occurs at residues Cys-220 and Cys-222. At Cys-224 the chain carries Cysteine methyl ester. Cys-224 is lipidated: S-farnesyl cysteine. The propeptide at 225–227 (SVA) is removed in mature form.

This sequence belongs to the small GTPase superfamily. Ras family. Interacts with PIK3CD. Expressed in several undifferentiated mouse embryonic stem cell lines.

The protein resides in the cell membrane. The catalysed reaction is GTP + H2O = GDP + phosphate + H(+). Alternates between an inactive form bound to GDP and an active form bound to GTP. Activated by a guanine nucleotide-exchange factor (GEF) and inactivated by a GTPase-activating protein (GAP). In terms of biological role, ras proteins bind GDP/GTP and possess intrinsic GTPase activity. Plays an important role in the tumor-like growth properties of embryonic stem cells. This Mus musculus (Mouse) protein is GTPase ERas (Eras).